We begin with the raw amino-acid sequence, 468 residues long: Ribulose bisphosphate carboxylase large chain (468 aa).

Lys-5 bears the N6,N6,N6-trimethyllysine mark. Substrate contacts are provided by Asn-114 and Thr-164. Lys-166 acts as the Proton acceptor in catalysis. Residue Lys-168 participates in substrate binding. Positions 192, 194, and 195 each coordinate Mg(2+). Lys-192 is subject to N6-carboxylysine. His-285 functions as the Proton acceptor in the catalytic mechanism. Positions 286, 318, and 370 each coordinate substrate.

The protein belongs to the RuBisCO large chain family. Type I subfamily. Heterohexadecamer of 8 large chains and 8 small chains; disulfide-linked. The disulfide link is formed within the large subunit homodimers. Requires Mg(2+) as cofactor. In terms of processing, the disulfide bond which can form in the large chain dimeric partners within the hexadecamer appears to be associated with oxidative stress and protein turnover.

The protein localises to the plastid. The protein resides in the chloroplast. The catalysed reaction is 2 (2R)-3-phosphoglycerate + 2 H(+) = D-ribulose 1,5-bisphosphate + CO2 + H2O. It carries out the reaction D-ribulose 1,5-bisphosphate + O2 = 2-phosphoglycolate + (2R)-3-phosphoglycerate + 2 H(+). In terms of biological role, ruBisCO catalyzes two reactions: the carboxylation of D-ribulose 1,5-bisphosphate, the primary event in carbon dioxide fixation, as well as the oxidative fragmentation of the pentose substrate in the photorespiration process. Both reactions occur simultaneously and in competition at the same active site. The polypeptide is Ribulose bisphosphate carboxylase large chain (Datura stramonium (Jimsonweed)).